Consider the following 285-residue polypeptide: Bifunctional protein FolD (285 aa).

Residues 166–168 and Ile232 each bind NADP(+); that span reads GAS.

Belongs to the tetrahydrofolate dehydrogenase/cyclohydrolase family. In terms of assembly, homodimer.

It catalyses the reaction (6R)-5,10-methylene-5,6,7,8-tetrahydrofolate + NADP(+) = (6R)-5,10-methenyltetrahydrofolate + NADPH. The enzyme catalyses (6R)-5,10-methenyltetrahydrofolate + H2O = (6R)-10-formyltetrahydrofolate + H(+). It participates in one-carbon metabolism; tetrahydrofolate interconversion. Catalyzes the oxidation of 5,10-methylenetetrahydrofolate to 5,10-methenyltetrahydrofolate and then the hydrolysis of 5,10-methenyltetrahydrofolate to 10-formyltetrahydrofolate. The protein is Bifunctional protein FolD of Vibrio vulnificus (strain CMCP6).